Reading from the N-terminus, the 361-residue chain is Phosphoserine aminotransferase (361 aa).

Residue R42 participates in L-glutamate binding. Pyridoxal 5'-phosphate-binding positions include 76–77 (AT), W102, T152, D172, and Q195. An N6-(pyridoxal phosphate)lysine modification is found at K196. Residue 237–238 (NT) participates in pyridoxal 5'-phosphate binding.

The protein belongs to the class-V pyridoxal-phosphate-dependent aminotransferase family. SerC subfamily. Homodimer. The cofactor is pyridoxal 5'-phosphate.

Its subcellular location is the cytoplasm. The catalysed reaction is O-phospho-L-serine + 2-oxoglutarate = 3-phosphooxypyruvate + L-glutamate. It catalyses the reaction 4-(phosphooxy)-L-threonine + 2-oxoglutarate = (R)-3-hydroxy-2-oxo-4-phosphooxybutanoate + L-glutamate. Its pathway is amino-acid biosynthesis; L-serine biosynthesis; L-serine from 3-phospho-D-glycerate: step 2/3. It functions in the pathway cofactor biosynthesis; pyridoxine 5'-phosphate biosynthesis; pyridoxine 5'-phosphate from D-erythrose 4-phosphate: step 3/5. Functionally, catalyzes the reversible conversion of 3-phosphohydroxypyruvate to phosphoserine and of 3-hydroxy-2-oxo-4-phosphonooxybutanoate to phosphohydroxythreonine. The chain is Phosphoserine aminotransferase from Xanthomonas oryzae pv. oryzae (strain MAFF 311018).